Consider the following 316-residue polypeptide: Phospholipase A1 4 (316 aa).

A signal peptide spans Ala-1–Leu-4. The propeptide occupies Thr-5–Arg-14. Residues Cys-20 and Cys-103 are joined by a disulfide bond. The active-site Nucleophile is the Ser-153. Asp-181 acts as the Charge relay system in catalysis. Disulfide bonds link Cys-192/Cys-197 and Cys-235/Cys-240. His-242 functions as the Charge relay system in the catalytic mechanism. 3 disulfide bridges follow: Cys-257–Cys-284, Cys-258–Cys-309, and Cys-277–Cys-282.

The protein belongs to the AB hydrolase superfamily. Lipase family. As to expression, expressed by the venom gland.

It is found in the secreted. It catalyses the reaction a 1,2-diacyl-sn-glycero-3-phosphocholine + H2O = a 2-acyl-sn-glycero-3-phosphocholine + a fatty acid + H(+). Catalyzes the hydrolysis of phosphatidylcholine with phospholipase A1 activity. May act as an allergen and induce hemolytic activity. This chain is Phospholipase A1 4, found in Polistes dominula (European paper wasp).